The chain runs to 328 residues: Reticulocalbin-3 (328 aa).

The N-terminal stretch at 1–20 (MMWRWTLMLLLLLLRHWALG) is a signal peptide. Residues 24–48 (PDAGPHGQDRVHHGTPLSEAPHDDA) are disordered. EF-hand domains lie at 75 to 112 (ESQA…TQQR), 113 to 148 (HIRD…HYEP), 163 to 198 (KMLA…EEFP), 200 to 235 (MRDI…AEPG), 241 to 276 (WVQT…PSQD), and 277 to 312 (QPLV…FVGS). Ca(2+)-binding residues include Asp92, Asp94, Trp96, Glu101, Asp126, Asp128, Asp130, Arg132, and Glu137. N-linked (GlcNAc...) asparagine glycosylation is present at Asn140. Residues Asp176, Asp178, Asp180, Met182, Glu187, Asp213, Asn215, Asp217, Tyr219, Glu224, Asp254, Asn256, Asp258, Arg260, Glu265, Asp290, Asp292, Asp294, Arg296, and Glu301 each contribute to the Ca(2+) site. The short motif at 325-328 (HDEL) is the Prevents secretion from ER element.

The protein belongs to the CREC family. In terms of assembly, interacts with PCSK6 (immature form including the propeptide); probably involved in the maturation and the secretion of PCSK6. N-glycosylated. In terms of processing, degraded by PCSK6 and other endoproteases including FURIN and PCSK5.

Its subcellular location is the endoplasmic reticulum lumen. Probable molecular chaperone assisting protein biosynthesis and transport in the endoplasmic reticulum. Required for the proper biosynthesis and transport of pulmonary surfactant-associated protein A/SP-A, pulmonary surfactant-associated protein D/SP-D and the lipid transporter ABCA3. By regulating both the proper expression and the degradation through the endoplasmic reticulum-associated protein degradation pathway of these proteins plays a crucial role in pulmonary surfactant homeostasis. Has an anti-fibrotic activity by negatively regulating the secretion of type I and type III collagens. This calcium-binding protein also transiently associates with immature PCSK6 and regulates its secretion. The chain is Reticulocalbin-3 from Rattus norvegicus (Rat).